The following is a 554-amino-acid chain: MASSQVGDMVNGNAEPTRHLAKFPPSLWGDRFTSFTLDKQLWDKYGNEIEVLKEQVRSMVVAGGRKAAEQINLINVLQRLGVSYHFEKEIEEQLEQLFAKFEDNEDYDLFTIALHFRIFRQHGYKMSCDVFNKFRDSNGEFKETMSNDVQGMLSLYEATYLKIRGEGFLDEAHAFTIAQLESLVEGPHLSSDLSEQVMHALKQSIHRGFPRLEAKHFISFYEKDASRNETLLRLAKLDFNQLQLSHREELCHIFRWWKELDLISKVPYARDRAVECFFWSTCAYYEPQHSVGRAVLTKIMLLLSVTDDTYDAYGTYNELKIYTNAVQRWDVSAMDELPDYMKALYRALLNVYDEVERDLAKQGRAYGVHHSKEAFKEIVRSYEIEAEWFKEGYVASFEEYMKNALVTSTGRLHTTSCFMGLEADVATTEAFEWILTKPKMVAASGAIGRLVDDVMSHDEEQERGHVATGLDCYMKQHGVSKQEAIVELYKMIENAWRDINEEMLKPTAISMKLLIRVLNLSRISDVVYKYVDGYTHPEIIKDHVISLFEDPIPM.

The Mg(2+) site is built by Asp307 and Asp311. The DDXXD motif signature appears at 326–330 (VQRWD). Mg(2+)-binding residues include Asp452, Ser456, and Glu460.

Belongs to the terpene synthase family. Mg(2+) serves as cofactor.

It catalyses the reaction (2E,6E)-farnesyl diphosphate + H2O = valerianol + diphosphate. It participates in secondary metabolite biosynthesis; terpenoid biosynthesis. Its function is as follows. Terpene synthase that catalyzes the biosynthesis of the terpene valerianol, which is a volatile compound of floral scent. The chain is Valerianol synthase TPS1B from Camellia hiemalis (Camellia).